Consider the following 458-residue polypeptide: Argininosuccinate lyase (458 aa).

Belongs to the lyase 1 family. Argininosuccinate lyase subfamily.

It localises to the cytoplasm. It carries out the reaction 2-(N(omega)-L-arginino)succinate = fumarate + L-arginine. It functions in the pathway amino-acid biosynthesis; L-arginine biosynthesis; L-arginine from L-ornithine and carbamoyl phosphate: step 3/3. In Acetivibrio thermocellus (strain ATCC 27405 / DSM 1237 / JCM 9322 / NBRC 103400 / NCIMB 10682 / NRRL B-4536 / VPI 7372) (Clostridium thermocellum), this protein is Argininosuccinate lyase.